The following is a 244-amino-acid chain: Tetraspanin-7 (244 aa).

Topologically, residues 1 to 11 (METKPVITCLK) are cytoplasmic. Residues 12–35 (TLLIIYSFVFWITGVILLAVGVWG) traverse the membrane as a helical segment. The Extracellular portion of the chain corresponds to 36 to 51 (KLTLGTYISLIAENST). N-linked (GlcNAc...) asparagine glycosylation is present at Asn49. Residues 52–70 (NAPYVLIGTGTTIVVFGLF) form a helical membrane-spanning segment. Residues 71–81 (GCFATCRGSPW) lie on the Cytoplasmic side of the membrane. A helical transmembrane segment spans residues 82–107 (MLKLYAMFLSLVFLAELVAGISGFVF). Residues 108–208 (RHEIKDTFLR…LVTSFMETNM (101 aa)) lie on the Extracellular side of the membrane. N-linked (GlcNAc...) asparagine glycans are attached at residues Asn150, Asn153, Asn172, and Asn183. The helical transmembrane segment at 209-229 (GIIAGVAFGIAFSQLIGMLLA) threads the bilayer. Topologically, residues 230-244 (CCLSRFITANQYEMV) are cytoplasmic.

It belongs to the tetraspanin (TM4SF) family.

The protein resides in the membrane. May be involved in cell proliferation and cell motility. The polypeptide is Tetraspanin-7 (TSPAN7) (Pongo pygmaeus (Bornean orangutan)).